A 411-amino-acid polypeptide reads, in one-letter code: Epoxyqueuosine reductase (411 aa).

D171 serves as the catalytic Proton donor. The region spanning 213–245 (LPLPVDKPQEEQCGRCVACMTTCPTGAIVAPYT) is the 4Fe-4S ferredoxin-type domain. [4Fe-4S] cluster is bound by residues C225, C228, C231, C235, C251, C278, C281, and C285.

It belongs to the QueG family. Monomer. It depends on cob(II)alamin as a cofactor. The cofactor is [4Fe-4S] cluster.

It is found in the cytoplasm. The enzyme catalyses epoxyqueuosine(34) in tRNA + AH2 = queuosine(34) in tRNA + A + H2O. It functions in the pathway tRNA modification; tRNA-queuosine biosynthesis. Catalyzes the conversion of epoxyqueuosine (oQ) to queuosine (Q), which is a hypermodified base found in the wobble positions of tRNA(Asp), tRNA(Asn), tRNA(His) and tRNA(Tyr). This Yersinia pestis protein is Epoxyqueuosine reductase.